The sequence spans 64 residues: Arasin 1 (64 aa).

The N-terminal stretch at 1 to 25 (MERRTLLVVLLVCSCVVAAAAEASP) is a signal peptide. The disordered stretch occupies residues 22–43 (EASPSRWPSPGRPRPFPGRPKP). The segment at 26–48 (SRWPSPGRPRPFPGRPKPIFRPR) is pro/Arg-rich region responsible for antibacterial and antifungal activity. Over residues 31 to 43 (PGRPRPFPGRPKP) the composition is skewed to pro residues. The segment at 49–62 (PCNCYAPPCPCDRW) is cystein-containing C-terminal region important for stability but not essential for antimicrobial activity. 2 disulfides stabilise this stretch: Cys50-Cys59 and Cys52-Cys57. Residues 63–64 (RH) constitute a propeptide that is removed on maturation.

In terms of assembly, interacts with chitin through the N-terminal region (26-48). This interaction may be important, since chitin is a component of the fungal cell wall, as well as of the crab exoskeleton (permitting a possible action of arasin in wound healing in case of lesions). Post-translationally, disulfide bonds are important for activity especially against Gram-negative bacteria, since the linearization of the peptide causes a strong decrease of activity on these bacteria. In terms of tissue distribution, mainly expressed in hemocytes. No or very low expression in heart, gills, inestines, and epidermis.

Functionally, antimicrobial peptide that has a large activity spectrum with activity against Gram-positive, Gram-negative bacteria, as well as against fungi. Shows activity at micromolar concentrations. Displays minimal inhibitory concentration (MIC) values lower than minimal bactericidal concentrations (MBC). Synthetic peptides with similar activities than the full length peptide (composed of the first 23 or 25 amino acids (Arasin 1(26-48) or Arasin 1(26-50))) may have a dual mode of action depending on the peptide concentrations. At MIC concentrations, the peptide penetrates into the cytoplasm of target cells (tested on the Gram-negative E.coli). The two inner membrane proteins YgdD and SbmA may be required for this uptake. At concentrations higher than MIC, arasin may act by disrupting membranes. Full-length and N-terminal peptides do not show hemolytic activity. This is Arasin 1 from Hyas araneus (Atlantic lyre crab).